The sequence spans 399 residues: Long-chain primary alcohol dehydrogenase AdhA (399 aa).

Belongs to the iron-containing alcohol dehydrogenase family. Homotetramer. The cofactor is Zn(2+).

The catalysed reaction is a primary alcohol + NADP(+) = an aldehyde + NADPH + H(+). Functionally, alcohol dehydrogenase active against primary long-chain alcohols. Pentan-1-ol is the optimum substrate in vitro, but also shows efficient dehydrogenase activity on propanol, hexanol, and ethanol. In Thermoanaerobacter ethanolicus (Clostridium thermohydrosulfuricum), this protein is Long-chain primary alcohol dehydrogenase AdhA (adhA).